A 187-amino-acid chain; its full sequence is Elongation factor P (187 aa).

It belongs to the elongation factor P family.

The protein localises to the cytoplasm. Its pathway is protein biosynthesis; polypeptide chain elongation. Involved in peptide bond synthesis. Stimulates efficient translation and peptide-bond synthesis on native or reconstituted 70S ribosomes in vitro. Probably functions indirectly by altering the affinity of the ribosome for aminoacyl-tRNA, thus increasing their reactivity as acceptors for peptidyl transferase. The sequence is that of Elongation factor P (efp) from Synechocystis sp. (strain ATCC 27184 / PCC 6803 / Kazusa).